A 61-amino-acid polypeptide reads, in one-letter code: Small ribosomal subunit protein uS14B (61 aa).

Zn(2+) is bound by residues Cys24, Cys27, Cys40, and Cys43.

It belongs to the universal ribosomal protein uS14 family. Zinc-binding uS14 subfamily. Part of the 30S ribosomal subunit. Contacts proteins S3 and S10. Requires Zn(2+) as cofactor.

Binds 16S rRNA, required for the assembly of 30S particles and may also be responsible for determining the conformation of the 16S rRNA at the A site. The protein is Small ribosomal subunit protein uS14B of Rhodococcus jostii (strain RHA1).